The primary structure comprises 500 residues: NAD(P)H-quinone oxidoreductase chain 4, chloroplastic (500 aa).

14 helical membrane passes run 4 to 24 (FPWL…LFFL), 31 to 51 (LIKW…TYAF), 87 to 107 (IGPI…AWPV), 113 to 130 (LFHF…GSFS), 134 to 154 (LLLF…LLSM), 167 to 187 (FILY…GLGL), 208 to 228 (ALEI…SPII), 242 to 262 (HYST…YGLV), 272 to 292 (AHSI…IYAA), 305 to 325 (IAYS…SITD), 330 to 350 (GAIL…FLAG), 386 to 406 (LALP…GIIT), 416 to 436 (ILIT…SLSM), and 462 to 482 (LFVS…PDFV).

This sequence belongs to the complex I subunit 4 family.

The protein localises to the plastid. The protein resides in the chloroplast thylakoid membrane. The enzyme catalyses a plastoquinone + NADH + (n+1) H(+)(in) = a plastoquinol + NAD(+) + n H(+)(out). It catalyses the reaction a plastoquinone + NADPH + (n+1) H(+)(in) = a plastoquinol + NADP(+) + n H(+)(out). The chain is NAD(P)H-quinone oxidoreductase chain 4, chloroplastic from Gossypium barbadense (Sea Island cotton).